The following is a 228-amino-acid chain: Small ribosomal subunit protein uS3 (228 aa).

Residues V39–R107 enclose the KH type-2 domain.

The protein belongs to the universal ribosomal protein uS3 family. In terms of assembly, part of the 30S ribosomal subunit. Forms a tight complex with proteins S10 and S14.

Its function is as follows. Binds the lower part of the 30S subunit head. Binds mRNA in the 70S ribosome, positioning it for translation. The polypeptide is Small ribosomal subunit protein uS3 (Halorhodospira halophila (strain DSM 244 / SL1) (Ectothiorhodospira halophila (strain DSM 244 / SL1))).